Here is a 323-residue protein sequence, read N- to C-terminus: Phosphoribosylformylglycinamidine cyclo-ligase (323 aa).

Belongs to the AIR synthase family.

The protein resides in the cytoplasm. It catalyses the reaction 2-formamido-N(1)-(5-O-phospho-beta-D-ribosyl)acetamidine + ATP = 5-amino-1-(5-phospho-beta-D-ribosyl)imidazole + ADP + phosphate + H(+). Its pathway is purine metabolism; IMP biosynthesis via de novo pathway; 5-amino-1-(5-phospho-D-ribosyl)imidazole from N(2)-formyl-N(1)-(5-phospho-D-ribosyl)glycinamide: step 2/2. This chain is Phosphoribosylformylglycinamidine cyclo-ligase, found in Saccharolobus solfataricus (strain ATCC 35092 / DSM 1617 / JCM 11322 / P2) (Sulfolobus solfataricus).